The following is a 238-amino-acid chain: Ribosomal RNA large subunit methyltransferase E (238 aa).

Residues Gly-76, Trp-78, Asp-99, Asp-115, and Asp-139 each coordinate S-adenosyl-L-methionine. Catalysis depends on Lys-179, which acts as the Proton acceptor.

It belongs to the class I-like SAM-binding methyltransferase superfamily. RNA methyltransferase RlmE family.

The protein resides in the cytoplasm. It catalyses the reaction uridine(2552) in 23S rRNA + S-adenosyl-L-methionine = 2'-O-methyluridine(2552) in 23S rRNA + S-adenosyl-L-homocysteine + H(+). Its function is as follows. Specifically methylates the uridine in position 2552 of 23S rRNA at the 2'-O position of the ribose in the fully assembled 50S ribosomal subunit. The sequence is that of Ribosomal RNA large subunit methyltransferase E from Rhodopseudomonas palustris (strain BisB18).